A 299-amino-acid polypeptide reads, in one-letter code: UPF0276 protein ABO_1518 (299 aa).

The protein belongs to the UPF0276 family.

This is UPF0276 protein ABO_1518 from Alcanivorax borkumensis (strain ATCC 700651 / DSM 11573 / NCIMB 13689 / SK2).